Here is a 1292-residue protein sequence, read N- to C-terminus: Sorbin and SH3 domain-containing protein 1 (1292 aa).

4 disordered regions span residues 1–29 (MSSE…ATAD), 73–158 (LRAS…AQPE), 214–275 (HLQR…SSPL), and 318–381 (REQQ…MDEV). Positions 74 to 89 (RASSSYRETPSSSPAS) are enriched in low complexity. Residue threonine 82 is modified to Phosphothreonine. 2 positions are modified to phosphoserine: serine 86 and serine 89. Over residues 93–102 (TRQHESKPGL) the composition is skewed to basic and acidic residues. Glutamate 105, leucine 114, valine 137, serine 146, serine 242, and serine 259 each carry phosphoserine. A compositionally biased stretch (polar residues) spans 114 to 128 (LSSSADANGNAQPSS). Positions 240-252 (SFSPPPPLVPPAP) are enriched in pro residues. The segment covering 266–275 (AVSSTDSSPL) has biased composition (polar residues). Serine 341 is subject to Phosphoserine. Threonine 344 is subject to Phosphothreonine. Residues glutamate 346 and serine 350 each carry the phosphoserine modification. A compositionally biased stretch (basic and acidic residues) spans 354-365 (AIEKRAKDDSRR). The SoHo domain occupies 366–469 (VVKSTQDLSD…YSPRYSFSED (104 aa)). A phosphoserine mark is found at serine 369, serine 374, and asparagine 387. The segment at 405–534 (LNRDTPEENP…TRKYRAEPKS (130 aa)) is disordered. The segment covering 437–450 (YTPTYQFPASTPSP) has biased composition (polar residues). Phosphoserine occurs at positions 452, 465, 469, 472, 478, and 481. Positions 510–534 (SSERNDWEPPDKKVDTRKYRAEPKS) are enriched in basic and acidic residues. Position 536 is a phosphotyrosine; by ABL1 (tyrosine 536). Serine 556, asparagine 603, serine 609, and serine 640 each carry phosphoserine. The segment at 628–650 (APSANVPQSSAISPTPEISSETP) is disordered. Tyrosine 654 carries the phosphotyrosine; by ABL1 modification. Residues serine 665 and lysine 700 each carry the phosphoserine modification. Positions 692–716 (PLQGLSGLKRPSSSASTKDSESPRH) are disordered. The residue at position 708 (threonine 708) is a Phosphothreonine. 4 positions are modified to phosphoserine: serine 713, isoleucine 730, aspartate 735, and isoleucine 765. An SH3 1 domain is found at 793–852 (SEMRPARAKFDFKAQTLKELPLQKGDIVYIYKQIDQNWYEGEHHGRVGIFPRTYIELLPP). Threonine 862 is modified (phosphothreonine). Positions 867–928 (LEYGEAIAKF…PITYVDVIKR (62 aa)) constitute an SH3 2 domain. Valine 923 is modified (phosphoserine). Residue tyrosine 937 is modified to Phosphotyrosine. The segment covering 944 to 954 (SSPSRSATASP) has biased composition (low complexity). Disordered stretches follow at residues 944-976 (SSPS…SRRA), 1041-1064 (SDRP…TYSL), 1106-1150 (QLSD…KKSC), and 1162-1230 (TEQR…SQTS). Residues serine 945 and serine 953 each carry the phosphoserine modification. The span at 955 to 971 (QFSSHSKLITPAPSSLP) shows a compositional bias: polar residues. Positions 1106–1117 (QLSDAFSSQSKR) are enriched in polar residues. Positions 1119–1136 (PWREESGQYERKAERGAG) are enriched in basic and acidic residues. Residues 1162–1172 (TEQRLSDLNTP) show a composition bias toward polar residues. The segment covering 1192-1203 (QTERHRGGEQAG) has biased composition (basic and acidic residues). Residues 1211–1230 (GSQQPQAQQRRVTPDRSQTS) show a composition bias toward polar residues. Phosphoserine is present on glutamine 1213. In terms of domain architecture, SH3 3 spans 1231 to 1292 (QDLFSYQALY…PGNYVKPLYL (62 aa)). Residue tyrosine 1240 is modified to Phosphotyrosine; by ABL1.

In terms of assembly, interacts (via third SH3 domain) with the Ten-1 ICD form of TENM1; the interaction induces the translocation of SORBS1 to the nucleus. Interacts with INSM1. Interacts with the long isoform of AFDN and with VCL. AFDN and VCL bind to SORBS1 in a competitive manner and do not form a ternary complex. Interacts with ABL1, CBL, CBLB and INPPL1/SHIP2 through the third SH3 domain. Interaction with ABL1 occurs only after insulin stimulation while this has no effect on the interaction with INPPL1. Interacts with the insulin receptor but dissociates from it following insulin stimulation. Also interacts with SCA7, PTK2/FAK1 and flotillin. Interacts (via SH3 domain 2) with PXN. In terms of processing, O-glycosylated. Detected in skeletal muscle (at protein level). Widely expressed with highest levels in heart and skeletal muscle.

It is found in the cell junction. The protein resides in the adherens junction. Its subcellular location is the cell membrane. The protein localises to the cytoplasm. It localises to the cytoskeleton. It is found in the focal adhesion. The protein resides in the nucleus. Its subcellular location is the nucleus matrix. Functionally, plays a role in tyrosine phosphorylation of CBL by linking CBL to the insulin receptor. Required for insulin-stimulated glucose transport. Involved in formation of actin stress fibers and focal adhesions. This is Sorbin and SH3 domain-containing protein 1 from Homo sapiens (Human).